Consider the following 36-residue polypeptide: Pancreatic polypeptide (36 aa).

Residue Tyr36 is modified to Tyrosine amide.

The protein belongs to the NPY family.

The protein localises to the secreted. Its function is as follows. Hormone secreted by pancreatic cells that acts as a regulator of pancreatic and gastrointestinal functions. In Larus argentatus (Herring gull), this protein is Pancreatic polypeptide (PPY).